We begin with the raw amino-acid sequence, 124 residues long: MIMTEVPEGLNYTKTHEWYRKDGNTATIGITDYAQSQMTDIVYVDLPKVGDKKKAGDVLLTIESVKSAEDVYSPITGTVTAVNEEVAKHPESINKDPYGSWLVKMAIESEGEHLSASEYRKLIQ.

Residues 25–106 (TATIGITDYA…PYGSWLVKMA (82 aa)) form the Lipoyl-binding domain. At lysine 66 the chain carries N6-lipoyllysine.

This sequence belongs to the GcvH family. The glycine cleavage system is composed of four proteins: P, T, L and H. It depends on (R)-lipoate as a cofactor.

The glycine cleavage system catalyzes the degradation of glycine. The H protein shuttles the methylamine group of glycine from the P protein to the T protein. The chain is Probable glycine cleavage system H protein from Thermoplasma acidophilum (strain ATCC 25905 / DSM 1728 / JCM 9062 / NBRC 15155 / AMRC-C165).